Reading from the N-terminus, the 499-residue chain is Aspartyl/glutamyl-tRNA(Asn/Gln) amidotransferase subunit B (499 aa).

It belongs to the GatB/GatE family. GatB subfamily. As to quaternary structure, heterotrimer of A, B and C subunits.

It carries out the reaction L-glutamyl-tRNA(Gln) + L-glutamine + ATP + H2O = L-glutaminyl-tRNA(Gln) + L-glutamate + ADP + phosphate + H(+). It catalyses the reaction L-aspartyl-tRNA(Asn) + L-glutamine + ATP + H2O = L-asparaginyl-tRNA(Asn) + L-glutamate + ADP + phosphate + 2 H(+). Allows the formation of correctly charged Asn-tRNA(Asn) or Gln-tRNA(Gln) through the transamidation of misacylated Asp-tRNA(Asn) or Glu-tRNA(Gln) in organisms which lack either or both of asparaginyl-tRNA or glutaminyl-tRNA synthetases. The reaction takes place in the presence of glutamine and ATP through an activated phospho-Asp-tRNA(Asn) or phospho-Glu-tRNA(Gln). The sequence is that of Aspartyl/glutamyl-tRNA(Asn/Gln) amidotransferase subunit B from Salinispora tropica (strain ATCC BAA-916 / DSM 44818 / JCM 13857 / NBRC 105044 / CNB-440).